The sequence spans 213 residues: Heat shock protein 27 (213 aa).

Residues S58 and S75 each carry the phosphoserine modification. Residues 71–182 form the sHSP domain; sequence SRRASGGPNA…SERIVQIQQT (112 aa). The disordered stretch occupies residues 157-213; that stretch reads VLTLKAPPPPSKEQAKSERIVQIQQTGPAHLSVKAPAPEAGDGKAENGSGEKMETSK. Over residues 197-213 the composition is skewed to basic and acidic residues; the sequence is GDGKAENGSGEKMETSK.

It belongs to the small heat shock protein (HSP20) family.

The polypeptide is Heat shock protein 27 (Hsp27) (Drosophila melanogaster (Fruit fly)).